We begin with the raw amino-acid sequence, 611 residues long: Large ribosomal subunit assembly factor BipA (611 aa).

Residues 7–202 enclose the tr-type G domain; that stretch reads KNLRNIAIIA…AIVKYTPPPT (196 aa). GTP contacts are provided by residues 19–24 and 132–135; these read DHGKTT and NKID.

The protein belongs to the TRAFAC class translation factor GTPase superfamily. Classic translation factor GTPase family. BipA subfamily. In terms of assembly, monomer.

The protein resides in the cytoplasm. It catalyses the reaction GTP + H2O = GDP + phosphate + H(+). A 50S ribosomal subunit assembly protein with GTPase activity, required for 50S subunit assembly at low temperatures, may also play a role in translation. Binds GTP and analogs. Binds the 70S ribosome between the 30S and 50S subunits, in a similar position as ribosome-bound EF-G; it contacts a number of ribosomal proteins, both rRNAs and the A-site tRNA. This Buchnera aphidicola subsp. Baizongia pistaciae (strain Bp) protein is Large ribosomal subunit assembly factor BipA.